A 412-amino-acid polypeptide reads, in one-letter code: MKNVVALILAGGQGTRLGVLTEKIAKPAVQFGGKYRLIDFTMSNCVNSGIYKIGVLTQYKPHLLNRHIGIGKPWDLDRKDGGVTILQPYSTEKVGVWYKGTADAVYSNIEFVDSYSPDYVVILSGDHIYSMDYNELVDYHVAKSALGTVACMEVPLSEANRFGIMVTDLENRIIEFQEKPKFPKSTLASLGIYVFQWNFIREVLMEDAKDENSTHDFGKDIIPKIINTKRVYAFPFEGYWKDVGTIYSYWESNLELTRPIPPFNIHDENWKIYTHSEEMPPAYISDDARVKNSLISEGCEIYGEVYNSVLAQGVEVGEGVIIKNSVVMSRVRIGNNCFIENAIIAENVVIGNEVKIGVGEFVENKLNSRVYNSEISVIGMDSVIEDKVKIGKNCVVGIDKIVSKSLTSGEYI.

Alpha-D-glucose 1-phosphate-binding positions include tyrosine 98, glycine 163, 178–179 (EK), and serine 189.

Belongs to the bacterial/plant glucose-1-phosphate adenylyltransferase family. As to quaternary structure, homotetramer.

The catalysed reaction is alpha-D-glucose 1-phosphate + ATP + H(+) = ADP-alpha-D-glucose + diphosphate. It participates in glycan biosynthesis; glycogen biosynthesis. In terms of biological role, involved in the biosynthesis of ADP-glucose, a building block required for the elongation reactions to produce glycogen. Catalyzes the reaction between ATP and alpha-D-glucose 1-phosphate (G1P) to produce pyrophosphate and ADP-Glc. The chain is Glucose-1-phosphate adenylyltransferase from Thermosipho melanesiensis (strain DSM 12029 / CIP 104789 / BI429).